Consider the following 276-residue polypeptide: 2-hydroxy-6-oxo-2,4-heptadienoate hydrolase (276 aa).

The AB hydrolase-1 domain maps to 28 to 259; that stretch reads NPVVLVHGSG…GRCGHWVQIE (232 aa). Catalysis depends on residues Ser105, Asp226, and His254.

This sequence belongs to the DmpD/TodF/XylF esterase family.

It carries out the reaction (2Z,4E)-2-hydroxy-6-oxohepta-2,4-dienoate + H2O = (2Z)-2-hydroxypenta-2,4-dienoate + acetate + H(+). Its pathway is xenobiotic degradation; toluene degradation. Catalyzes the hydrolysis of 2-hydroxy-6-oxohepta-2,4-dienoate into 2-hydroxypenta-2,4-dienoate and acetate. In Pseudomonas putida (strain ATCC 700007 / DSM 6899 / JCM 31910 / BCRC 17059 / LMG 24140 / F1), this protein is 2-hydroxy-6-oxo-2,4-heptadienoate hydrolase (todF).